Consider the following 45-residue polypeptide: uncharacterized protein (45 aa).

A helical transmembrane segment spans residues 10 to 27; it reads LLYFVLFVDIYGIFTNNI.

The protein resides in the membrane. This is an uncharacterized protein from Dictyostelium discoideum (Social amoeba).